We begin with the raw amino-acid sequence, 1327 residues long: uncharacterized protein (1327 aa).

Position 884-885 (884-885 (WD)) interacts with substrate. The active-site Proton donor is Glu1023. 1143-1144 (KQ) is a substrate binding site.

In the N-terminal section; belongs to the trehalose phosphatase family. The protein in the C-terminal section; belongs to the glycosyl hydrolase 65 family.

This is an uncharacterized protein from Mycobacterium tuberculosis (strain CDC 1551 / Oshkosh).